A 215-amino-acid chain; its full sequence is MRMTRAASALAGLGLAVAAALGSVAPASAAAETSTPRSVAAYEASTENAAATRAFQEAVMKAVAEKRAANPGALAVTVTYDASAAPTFRSQIASSTSIWNGAVSNVRLQEGSNADFTYREGNDPRGSYASTEAHGRGYIFLDYAQNQQYNSTRVTTHETGHVLGLPDTYSGPCSQLMSGGGPGPSCTNAQPDSAERSRVEQLWANGLAEAAAEVR.

A signal peptide spans 1–30 (MRMTRAASALAGLGLAVAAALGSVAPASAA). Residue threonine 152 coordinates Ca(2+). A Zn(2+)-binding site is contributed by histidine 157. Glutamate 158 is an active-site residue. Zn(2+) is bound by residues histidine 161 and aspartate 167. A disulfide bridge connects residues cysteine 173 and cysteine 186.

Belongs to the peptidase M7 family. The cofactor is Zn(2+).

It is found in the secreted. It catalyses the reaction Hydrolyzes proteins with a preference for Tyr or Phe in the P1' position. Has no action on amino-acid p-nitroanilides.. The sequence is that of Extracellular small neutral protease (snpA) from Streptomyces coelicolor.